Here is a 483-residue protein sequence, read N- to C-terminus: PAT complex subunit CCDC47 (483 aa).

A signal peptide spans 1–20 (MKAFYAFCVVLLVFGSVSEA). The Cytoplasmic portion of the chain corresponds to 21-135 (KFDDFEDEED…PAHLQNSWES (115 aa)). The disordered stretch occupies residues 46-119 (MEDSVTESPQ…DTSSNKNKDP (74 aa)). Residues 60-104 (TEDDEDEATVELEGQDESQEGDFEDADTQEGDTESEPYDDEEFEG) show a composition bias toward acidic residues. The segment covering 105–118 (YEDKPDTSSNKNKD) has biased composition (basic and acidic residues). Residues 136–156 (YYLEILMVTGLLAYIMNYIIG) traverse the membrane as a helical segment. Residues 157-483 (KNKNSRLAQA…KMKQIKVKAM (327 aa)) lie on the Lumenal side of the membrane. Asn-178 is a glycosylation site (N-linked (GlcNAc...) asparagine). The segment at 424–483 (QRQEAAQSRREEKKRAEKERIMNEEDPEKQRRLEEAALRREQKKLEKKQMKMKQIKVKAM) is disordered. Positions 430–472 (QSRREEKKRAEKERIMNEEDPEKQRRLEEAALRREQKKLEKKQ) are enriched in basic and acidic residues. Residues 450–483 (PEKQRRLEEAALRREQKKLEKKQMKMKQIKVKAM) adopt a coiled-coil conformation. Basic residues predominate over residues 473–483 (MKMKQIKVKAM).

It belongs to the CCDC47 family. Component of the PAT complex, composed of WDR83OS/Asterix and CCDC47. The PAT complex is part of the multi-pass translocon (MPT) complex, composed of three subcomplexes, the GEL complex (composed of RAB5IF/OPTI and TMCO1), the BOS complex (composed of NCLN/Nicalin, NOMO1 and TMEM147) and the PAT complex (composed of WDR83OS/Asterix and CCDC47). The MPT complex associates with the SEC61 complex. Interacts with VCP, HSPA5, DERL1, DERL2 and SELENOS. As to expression, in the embryo, expressed in the endodermal layer of the yolk sac and in the small intestine.

Its subcellular location is the endoplasmic reticulum membrane. The protein localises to the rough endoplasmic reticulum membrane. Component of the multi-pass translocon (MPT) complex that mediates insertion of multi-pass membrane proteins into the lipid bilayer of membranes. The MPT complex takes over after the SEC61 complex: following membrane insertion of the first few transmembrane segments of proteins by the SEC61 complex, the MPT complex occludes the lateral gate of the SEC61 complex to promote insertion of subsequent transmembrane regions. Within the MPT complex, the PAT subcomplex sequesters any highly polar regions in the transmembrane domains away from the non-polar membrane environment until they can be buried in the interior of the fully assembled protein. Within the PAT subcomplex, CCDC47 occludes the lateral gate of the SEC61 complex. Involved in the regulation of calcium ion homeostasis in the ER. Required for proper protein degradation via the ERAD (ER-associated degradation) pathway. Has an essential role in the maintenance of ER organization during embryogenesis. This is PAT complex subunit CCDC47 from Mus musculus (Mouse).